A 122-amino-acid polypeptide reads, in one-letter code: Truncated CrmB protein (122 aa).

Functionally, the protein is truncated in this strain and presumably inactive. It has similarities with variola virus CrmB, but the product is inactivated due to several premature stop codons. The chain is Truncated CrmB protein (OPG002) from Bos taurus (Bovine).